Consider the following 606-residue polypeptide: Ribonucleoprotein PTB-binding 1 (606 aa).

Residues 1 to 41 (MAADVSVTHRPPLSPKSGAEVEAGDAAERRAPEEELPPLDP) are disordered. N-acetylalanine is present on Ala-2. Ser-6 and Ser-14 each carry phosphoserine. The Nuclear localization signal signature appears at 45 to 60 (RKRLEHTERQFRNRRK). RRM domains are found at residues 59 to 130 (RKIL…LQPT), 132 to 210 (ALLC…WTDA), and 221 to 299 (RCLC…FCAP). The interaction with PTBP1 stretch occupies residues 307–395 (LAALIAAQAT…QTQGQKKPGI (89 aa)). Residues 391–474 (KKPGILGDSP…PPAPVGLRGS (84 aa)) are disordered. A compositionally biased stretch (low complexity) spans 453-462 (LGLGPPAAQL). The residue at position 463 (Thr-463) is a Phosphothreonine. At Ser-474 the chain carries Phosphoserine. Position 488 is a phosphothreonine (Pro-488). The tract at residues 519–564 (GLLGLSPGPNGHSHLLKVRAGGGDMQGWEAPAPQRPLTRPALPSVS) is disordered. 2 positions are modified to phosphoserine: Ser-562 and His-567. A disordered region spans residues 579–606 (CPRPSPAQKAAMWASTPRASAATTRTPT). The segment covering 592–606 (ASTPRASAATTRTPT) has biased composition (low complexity).

As to quaternary structure, interacts with PTBP1, RAVER2, VCL and ACTN1. Part of a complex containing RAVER1, VCL and ACTN1.

It localises to the nucleus. Its subcellular location is the cytoplasm. Its function is as follows. Cooperates with PTBP1 to modulate regulated alternative splicing events. Promotes exon skipping. Cooperates with PTBP1 to modulate switching between mutually exclusive exons during maturation of the TPM1 pre-mRNA. This Homo sapiens (Human) protein is Ribonucleoprotein PTB-binding 1 (RAVER1).